Reading from the N-terminus, the 484-residue chain is tRNA sulfurtransferase (484 aa).

Positions R63–Q167 constitute a THUMP domain. ATP-binding positions include L185–M186, K267, G289, and Q298. A disulfide bridge links C346 with C457. The 79-residue stretch at V405–P483 folds into the Rhodanese domain. C457 (cysteine persulfide intermediate) is an active-site residue.

It belongs to the ThiI family.

It localises to the cytoplasm. The catalysed reaction is [ThiI sulfur-carrier protein]-S-sulfanyl-L-cysteine + a uridine in tRNA + 2 reduced [2Fe-2S]-[ferredoxin] + ATP + H(+) = [ThiI sulfur-carrier protein]-L-cysteine + a 4-thiouridine in tRNA + 2 oxidized [2Fe-2S]-[ferredoxin] + AMP + diphosphate. It catalyses the reaction [ThiS sulfur-carrier protein]-C-terminal Gly-Gly-AMP + S-sulfanyl-L-cysteinyl-[cysteine desulfurase] + AH2 = [ThiS sulfur-carrier protein]-C-terminal-Gly-aminoethanethioate + L-cysteinyl-[cysteine desulfurase] + A + AMP + 2 H(+). It functions in the pathway cofactor biosynthesis; thiamine diphosphate biosynthesis. Its function is as follows. Catalyzes the ATP-dependent transfer of a sulfur to tRNA to produce 4-thiouridine in position 8 of tRNAs, which functions as a near-UV photosensor. Also catalyzes the transfer of sulfur to the sulfur carrier protein ThiS, forming ThiS-thiocarboxylate. This is a step in the synthesis of thiazole, in the thiamine biosynthesis pathway. The sulfur is donated as persulfide by IscS. This chain is tRNA sulfurtransferase, found in Pseudomonas aeruginosa (strain LESB58).